The following is a 363-amino-acid chain: 3-isopropylmalate dehydrogenase (363 aa).

Residue 79-92 coordinates NAD(+); the sequence is GPKWEHLPPNDQPE. Substrate contacts are provided by Arg100, Arg110, Arg139, and Asp228. 3 residues coordinate Mg(2+): Asp228, Asp252, and Asp256. 286–298 lines the NAD(+) pocket; it reads GSAPDIAGKNIAN.

The protein belongs to the isocitrate and isopropylmalate dehydrogenases family. LeuB type 1 subfamily. As to quaternary structure, homodimer. Mg(2+) serves as cofactor. It depends on Mn(2+) as a cofactor.

The protein resides in the cytoplasm. It catalyses the reaction (2R,3S)-3-isopropylmalate + NAD(+) = 4-methyl-2-oxopentanoate + CO2 + NADH. It participates in amino-acid biosynthesis; L-leucine biosynthesis; L-leucine from 3-methyl-2-oxobutanoate: step 3/4. In terms of biological role, catalyzes the oxidation of 3-carboxy-2-hydroxy-4-methylpentanoate (3-isopropylmalate) to 3-carboxy-4-methyl-2-oxopentanoate. The product decarboxylates to 4-methyl-2 oxopentanoate. The polypeptide is 3-isopropylmalate dehydrogenase (Aliivibrio fischeri (strain ATCC 700601 / ES114) (Vibrio fischeri)).